We begin with the raw amino-acid sequence, 377 residues long: Chaperone protein DnaJ (377 aa).

One can recognise a J domain in the interval Asp-5–Gly-70. Residues Gly-133–Ser-211 form a CR-type zinc finger. 8 residues coordinate Zn(2+): Cys-146, Cys-149, Cys-163, Cys-166, Cys-185, Cys-188, Cys-199, and Cys-202. 4 CXXCXGXG motif repeats span residues Cys-146–Gly-153, Cys-163–Gly-170, Cys-185–Gly-192, and Cys-199–Gly-206.

The protein belongs to the DnaJ family. As to quaternary structure, homodimer. Requires Zn(2+) as cofactor.

It localises to the cytoplasm. Functionally, participates actively in the response to hyperosmotic and heat shock by preventing the aggregation of stress-denatured proteins and by disaggregating proteins, also in an autonomous, DnaK-independent fashion. Unfolded proteins bind initially to DnaJ; upon interaction with the DnaJ-bound protein, DnaK hydrolyzes its bound ATP, resulting in the formation of a stable complex. GrpE releases ADP from DnaK; ATP binding to DnaK triggers the release of the substrate protein, thus completing the reaction cycle. Several rounds of ATP-dependent interactions between DnaJ, DnaK and GrpE are required for fully efficient folding. Also involved, together with DnaK and GrpE, in the DNA replication of plasmids through activation of initiation proteins. This is Chaperone protein DnaJ from Psychromonas ingrahamii (strain DSM 17664 / CCUG 51855 / 37).